Reading from the N-terminus, the 90-residue chain is MIRRLLIAPIRFYRYFLSPWVGRQCRFTPTCSAYAIEAIERHGAWRGLWLAARRIGRCHPWSPGGYDPVPPGHGAGAQACCAHRHRTEPD.

Belongs to the UPF0161 family.

It is found in the cell inner membrane. Its function is as follows. Could be involved in insertion of integral membrane proteins into the membrane. This Bordetella bronchiseptica (strain ATCC BAA-588 / NCTC 13252 / RB50) (Alcaligenes bronchisepticus) protein is Putative membrane protein insertion efficiency factor.